Reading from the N-terminus, the 476-residue chain is MVGAMWKVIVSLVLLMPGPCDGLFRSLYRSVSMPPKGDSGQPLFLTPYIEAGKIQKGRELSLVGPFPGLNMKSYAGFLTVNKTYNSNLFFWFFPAQIQPEDAPVVLWLQGGPGGSSMFGLFVEHGPYVVTSNMTLRDRDFPWTTTLSMLYIDNPVGTGFSFTDDTHGYAVNEDDVARDLYSALIQFFQIFPEYKNNDFYVTGESYAGKYVPAIAHLIHSLNPVREVKINLNGIAIGDGYSDPESIIGGYAEFLYQIGLLDEKQKKYFQKQCHECIEHIRKQNWFEAFEILDKLLDGDLTSDPSYFQNVTGCSNYYNFLRCTEPEDQLYYVKFLSLPEVRQAIHVGNQTFNDGTIVEKYLREDTVQSVKPWLTEIMNNYKVLIYNGQLDIIVAAALTERSLMGMDWKGSQEYKKAEKKVWKIFKSDSEVAGYIRQAGDFHQVIIRGGGHILPYDQPLRAFDMINRFIYGKGWDPYVG.

Residues 1–22 (MVGAMWKVIVSLVLLMPGPCDG) form the signal peptide. N-linked (GlcNAc...) asparagine glycans are attached at residues Asn-81 and Asn-132. Ser-204 is an active-site residue. 2 N-linked (GlcNAc...) asparagine glycosylation sites follow: Asn-307 and Asn-346. Catalysis depends on residues Asp-388 and His-448.

The protein belongs to the peptidase S10 family. As to expression, expressed in macrophages but not in other leukocytes. Abundantly expressed in heart and kidney. Also expressed in spleen, leukocytes, and placenta.

Functionally, may be involved in the digestion of phagocytosed particles in the lysosome, participation in an inflammatory protease cascade, and trimming of peptides for antigen presentation. This chain is Probable serine carboxypeptidase CPVL (CPVL), found in Homo sapiens (Human).